The sequence spans 102 residues: Parathymosin (102 aa).

The tract at residues 1–102 (MSEKSVEAAA…RQKTENGASA (102 aa)) is disordered. Serine 2 carries the post-translational modification N-acetylserine. The residue at position 2 (serine 2) is a Phosphoserine. Position 4 is an N6-acetyllysine (lysine 4). A phosphoserine mark is found at serine 5 and serine 13. A compositionally biased stretch (basic and acidic residues) spans 13-37 (SAKDLKEKKEKVEEKASRKERKKEV). Lysine 15 is modified (N6-acetyllysine). Positions 38 to 76 (VEEEENGAEEEEEETAEDGEEEDEGEEEDEEEEEEDDEG) are enriched in acidic residues. At threonine 52 the chain carries Phosphothreonine. An N6-acetyllysine modification is found at lysine 92.

The protein belongs to the pro/parathymosin family.

Parathymosin may mediate immune function by blocking the effect of prothymosin alpha which confers resistance to certain opportunistic infections. This Homo sapiens (Human) protein is Parathymosin (PTMS).